The following is a 108-amino-acid chain: Thioredoxin (108 aa).

One can recognise a Thioredoxin domain in the interval 2-108 (NKIIELTDQN…LKEFLDENIN (107 aa)). Cysteine 32 and cysteine 35 are oxidised to a cystine.

It belongs to the thioredoxin family.

Its function is as follows. Participates in various redox reactions through the reversible oxidation of its active center dithiol to a disulfide and catalyzes dithiol-disulfide exchange reactions. The polypeptide is Thioredoxin (trxA) (Buchnera aphidicola subsp. Acyrthosiphon pisum (strain APS) (Acyrthosiphon pisum symbiotic bacterium)).